A 428-amino-acid polypeptide reads, in one-letter code: Adenylosuccinate synthetase (428 aa).

GTP-binding positions include 12–18 and 40–42; these read GDEGKGK and GHS. Asp13 acts as the Proton acceptor in catalysis. The Mg(2+) site is built by Asp13 and Gly40. Residues 13-16, 38-41, Thr128, Arg142, Gln223, Thr238, and Arg302 each bind IMP; these read DEGK and NAGH. The Proton donor role is filled by His41. 298–304 provides a ligand contact to substrate; the sequence is VTTGRPR. GTP is bound by residues Arg304, 330 to 332, and 412 to 414; these read KLD and GTG.

Belongs to the adenylosuccinate synthetase family. In terms of assembly, homodimer. It depends on Mg(2+) as a cofactor.

The protein resides in the cytoplasm. It catalyses the reaction IMP + L-aspartate + GTP = N(6)-(1,2-dicarboxyethyl)-AMP + GDP + phosphate + 2 H(+). It participates in purine metabolism; AMP biosynthesis via de novo pathway; AMP from IMP: step 1/2. Plays an important role in the de novo pathway of purine nucleotide biosynthesis. Catalyzes the first committed step in the biosynthesis of AMP from IMP. The protein is Adenylosuccinate synthetase of Bifidobacterium longum (strain DJO10A).